The following is a 140-amino-acid chain: Large ribosomal subunit protein uL11 (140 aa).

Belongs to the universal ribosomal protein uL11 family. Part of the ribosomal stalk of the 50S ribosomal subunit. Interacts with L10 and the large rRNA to form the base of the stalk. L10 forms an elongated spine to which L12 dimers bind in a sequential fashion forming a multimeric L10(L12)X complex. In terms of processing, one or more lysine residues are methylated.

Its function is as follows. Forms part of the ribosomal stalk which helps the ribosome interact with GTP-bound translation factors. In Syntrophobacter fumaroxidans (strain DSM 10017 / MPOB), this protein is Large ribosomal subunit protein uL11.